The chain runs to 294 residues: Tetraspanin-15 (294 aa).

Topologically, residues 1 to 23 are cytoplasmic; that stretch reads MPRGDSEQVRYCARFSYLWLKFS. A helical membrane pass occupies residues 24–44; that stretch reads LIIYSTVFWLIGGLVLSVGIY. The Extracellular segment spans residues 45–62; sequence AEAERQKYKTLESAFLAP. The helical transmembrane segment at 63–83 threads the bilayer; sequence AIILILLGVVMFIVSFIGVLA. The Cytoplasmic portion of the chain corresponds to 84–94; it reads SLRDNLCLLQS. The helical transmembrane segment at 95–115 threads the bilayer; the sequence is FMYILGICLVMELIGGIVALI. At 116–235 the chain is on the extracellular side; sequence FRNQTIDFLN…WFMDNYTIMA (120 aa). Residue Asn118 is glycosylated (N-linked (GlcNAc...) asparagine). 4 disulfide bridges follow: Cys154–Cys219, Cys155–Cys185, Cys171–Cys179, and Cys186–Cys198. Asn189 and Asn230 each carry an N-linked (GlcNAc...) asparagine glycan. The chain crosses the membrane as a helical span at residues 236 to 256; it reads GLLLGILLPQFLGVLLTLLYI. Topologically, residues 257 to 294 are cytoplasmic; that stretch reads TRVEDIILEHSVTDGLLGPGAKSRTDTAGTGCCLCYPD.

Belongs to the tetraspanin (TM4SF) family. As to quaternary structure, interacts with ADAM10; the interaction influences ADAM10 substrate specificity, endocytosis and turnover. Palmitoylated.

It is found in the cell membrane. The protein resides in the late endosome membrane. In terms of biological role, part of TspanC8 subgroup, composed of 6 members that interact with the transmembrane metalloprotease ADAM10. This interaction is required for ADAM10 exit from the endoplasmic reticulum and for enzymatic maturation and trafficking to the cell surface as well as substrate specificity. Different TspanC8/ADAM10 complexes have distinct substrates. Promotes ADAM10-mediated cleavage of CDH2. Negatively regulates ligand-induced Notch activity probably by regulating ADAM10 activity. This chain is Tetraspanin-15 (Tspan15), found in Mus musculus (Mouse).